We begin with the raw amino-acid sequence, 174 residues long: uncharacterized protein (174 aa).

The disordered stretch occupies residues 138-174 (VNLTSKSSGRSDEEGTTRRAPVLKTRADFVSRKDKHR). The span at 162–174 (TRADFVSRKDKHR) shows a compositional bias: basic and acidic residues.

This is an uncharacterized protein from Bos taurus (Bovine).